The primary structure comprises 197 residues: Nucleoid occlusion factor SlmA (197 aa).

The HTH tetR-type domain occupies 7–67 (ISRREHILQC…GLIEFIEDSL (61 aa)). Residues 30–49 (TTAKLAAEVGVSEAALYRHF) constitute a DNA-binding region (H-T-H motif).

This sequence belongs to the nucleoid occlusion factor SlmA family. As to quaternary structure, homodimer. Interacts with FtsZ.

Its subcellular location is the cytoplasm. The protein resides in the nucleoid. In terms of biological role, required for nucleoid occlusion (NO) phenomenon, which prevents Z-ring formation and cell division over the nucleoid. Acts as a DNA-associated cell division inhibitor that binds simultaneously chromosomal DNA and FtsZ, and disrupts the assembly of FtsZ polymers. SlmA-DNA-binding sequences (SBS) are dispersed on non-Ter regions of the chromosome, preventing FtsZ polymerization at these regions. This is Nucleoid occlusion factor SlmA from Shewanella amazonensis (strain ATCC BAA-1098 / SB2B).